Consider the following 189-residue polypeptide: Peptidyl-tRNA hydrolase (189 aa).

Tyr-15 is a tRNA binding site. His-20 (proton acceptor) is an active-site residue. The tRNA site is built by Tyr-65, Asn-67, and Asn-113.

Belongs to the PTH family. In terms of assembly, monomer.

The protein resides in the cytoplasm. It catalyses the reaction an N-acyl-L-alpha-aminoacyl-tRNA + H2O = an N-acyl-L-amino acid + a tRNA + H(+). Hydrolyzes ribosome-free peptidyl-tRNAs (with 1 or more amino acids incorporated), which drop off the ribosome during protein synthesis, or as a result of ribosome stalling. In terms of biological role, catalyzes the release of premature peptidyl moieties from peptidyl-tRNA molecules trapped in stalled 50S ribosomal subunits, and thus maintains levels of free tRNAs and 50S ribosomes. The polypeptide is Peptidyl-tRNA hydrolase (Caldicellulosiruptor saccharolyticus (strain ATCC 43494 / DSM 8903 / Tp8T 6331)).